Here is a 347-residue protein sequence, read N- to C-terminus: G-protein coupled receptor homolog U12 (347 aa).

6 helical membrane passes run 36–56 (GITL…MILY), 67–87 (FYVI…FFMT), 103–124 (LVYF…IIAT), 147–167 (IGIL…FVKT), 194–214 (IVFS…FYVI), and 236–256 (ILLL…ICEI). Cysteine 101 and cysteine 176 are joined by a disulfide. Positions 321-347 (QKRKDSDASEHDQNSKSKASVEKNQPL) are disordered. Residues 322–341 (KRKDSDASEHDQNSKSKASV) are compositionally biased toward basic and acidic residues.

Belongs to the G-protein coupled receptor 1 family.

The protein localises to the membrane. Its function is as follows. Probable G-protein coupled receptor. The sequence is that of G-protein coupled receptor homolog U12 (U12) from Homo sapiens (Human).